Here is an 89-residue protein sequence, read N- to C-terminus: Putative defensin-like protein 254 (89 aa).

The signal sequence occupies residues 1-20 (MHNISFKLLLLCDLFLSSSS). Disulfide bonds link Cys31-Cys48 and Cys37-Cys55.

Belongs to the DEFL family.

The protein resides in the secreted. The protein is Putative defensin-like protein 254 of Arabidopsis thaliana (Mouse-ear cress).